The chain runs to 488 residues: Splicing factor U2AF 65 kDa subunit (488 aa).

Basic and acidic residues-rich tracts occupy residues 25-55 (LESLQEDVKPDVKSDLNGNGEEKRDRDDEDR) and 78-129 (DRRD…KYRF). The interval 25-133 (LESLQEDVKP…PKKYRFWDVP (109 aa)) is disordered. 3 consecutive RRM domains span residues 175-257 (RRLY…RPRD), 282-359 (NKIF…LACA), and 389-479 (EILC…YYDV).

It belongs to the splicing factor SR family. As to quaternary structure, forms a heterodimer with the U2AF small subunit.

The protein resides in the nucleus. Its function is as follows. Necessary for the splicing of pre-mRNA. Binds to the polypyrimidine tract of introns early during spliceosome assembly. This chain is Splicing factor U2AF 65 kDa subunit (uaf-1), found in Caenorhabditis briggsae.